We begin with the raw amino-acid sequence, 153 residues long: Regulatory protein RecX (153 aa).

It belongs to the RecX family.

It localises to the cytoplasm. Its function is as follows. Modulates RecA activity. The chain is Regulatory protein RecX from Syntrophotalea carbinolica (strain DSM 2380 / NBRC 103641 / GraBd1) (Pelobacter carbinolicus).